The chain runs to 66 residues: Potassium channel toxin alpha-KTx 27.3 (66 aa).

The N-terminal stretch at 1 to 17 (MKLMWLLFLCVLAFSIA) is a signal peptide.

Belongs to the short scorpion toxin superfamily. Potassium channel inhibitor family. Alpha-KTx 27 subfamily. In terms of processing, contains 4 disulfide bonds. In terms of tissue distribution, expressed by the venom gland.

It localises to the secreted. This Lychas mucronatus (Chinese swimming scorpion) protein is Potassium channel toxin alpha-KTx 27.3.